A 337-amino-acid chain; its full sequence is Outer membrane protein assembly factor BamC (337 aa).

The signal sequence occupies residues 1-16; it reads MKKWLFPFAFVATLAG. Cys-17 carries the N-palmitoyl cysteine lipid modification. The S-diacylglycerol cysteine moiety is linked to residue Cys-17.

The protein belongs to the BamC family. In terms of assembly, part of the Bam complex.

The protein resides in the cell outer membrane. Its function is as follows. Part of the outer membrane protein assembly complex, which is involved in assembly and insertion of beta-barrel proteins into the outer membrane. In Pasteurella multocida (strain Pm70), this protein is Outer membrane protein assembly factor BamC.